An 854-amino-acid polypeptide reads, in one-letter code: Protein unc-33 (854 aa).

Disordered stretches follow at residues 57–114, 130–327, and 794–854; these read ETVS…IPAP, ELFG…DGNG, and VERV…TGFW. 2 stretches are compositionally biased toward polar residues: residues 58–68 and 75–97; these read TVSNKSRSSEG and RPNS…TSAR. Residues 193 to 202 show a composition bias toward basic and acidic residues; the sequence is KVLRGEKSTP. Acidic residues predominate over residues 240–257; sequence VDDEEEPEAEAQEMEEPQ. The span at 279–298 shows a compositional bias: basic and acidic residues; sequence HPSEDGDSTRNGETPTDRRN. The segment covering 802-811 has biased composition (polar residues); that stretch reads SSQQQKPQQN. The segment covering 816–827 has biased composition (basic and acidic residues); sequence NSGDFDRNRTKV.

This sequence belongs to the metallo-dependent hydrolases superfamily. Hydantoinase/dihydropyrimidinase family. In terms of assembly, isoform a: Probable monomer. Isoform b: Probable homodimer. Isoform c: Probable homodimer. Probable heterodimer composed of isoform b and isoform c. Interacts with unc-14 and kinesin-1 motor complex light chain klc-1; both interactions regulate unc-33 neurite localization. Interacts with fln-1 (via calponin-homology (CH) domains and filamin repeat 18-19). Isoform c: Interacts with vab-8 isoform a. Expressed in ventral cord and nerve ring (at protein level). Isoform a: Expressed in nerve ring (at protein level). Expressed in the nervous system, two amphid socket cells and weakly in non-neuronal pharyngeal cells.

Its subcellular location is the cell projection. The protein localises to the axon. It is found in the dendrite. Functionally, during neurogenesis, plays an essential role in axonal guidance and outgrowth by regulating the polarization of both microtubule and actin cytoskeletons. Establishes the asymmetry of axonal and dendrite microtubules and the polarized sorting of neuronal proteins. This is achieved in part by regulating the localization of kinesin-like protein unc-104. In neurons without a distal microtubule-organizing center (MTOC), also controls the organization of microtubules in dendrites. During the dorso-ventral axonal guidance and outgrowth of VD neurons, required downstream of Rac GTPases ced-10 and mig-2 to inhibit growth cone filopodial protrusion mediated by the unc-6/netrin receptor unc-40-unc-5. Specifically, regulates growth cone filopodial protrusion polarity, and thus migration, by promoting F-actin polarization and by restricting plus-end microtubule accumulation in the growth cone. Probably downstream of mab-20/Sema2a and mab-20 receptor plx-2, regulates the guidance of DD/VD neuron axons by modulating fln-1 interaction with F-actin which results in the remodeling of the actin cytoskeleton. In hermaphrodites, involved in sex myoblast (SM) migration by regulating the gonad-dependent repulsion of SMs. In terms of biological role, in neurons, required for the polarized sorting of axonal proteins. In PLM neuron, regulates innexin unc-9 gap junction turnover by suppressing unc-9 transport out of gap junctions. Plays a role in locomotion and egg-laying. Its function is as follows. In PLM neuron, regulates innexin unc-9 gap junction turnover by suppressing unc-9 transport out of gap junctions. The polypeptide is Protein unc-33 (Caenorhabditis elegans).